Reading from the N-terminus, the 421-residue chain is Testin (421 aa).

The region spanning 92–199 (MILTNPVAAK…GDVKLPRDMN (108 aa)) is the PET domain. 2 disordered regions span residues 133-164 (EKQP…PSKC) and 193-213 (KLPR…GGDR). The segment covering 155–164 (PAHDQDPSKC) has biased composition (basic and acidic residues). LIM zinc-binding domains follow at residues 234–297 (YSCY…CDSE), 299–359 (PRCA…NHAV), and 362–421 (QGCH…KMMS).

Belongs to the prickle / espinas / testin family. Interacts via LIM domain 1 with ZYX. Interacts (via LIM domain 3) with ENAH and VASP. Interacts with ALKBH4, talin, actin, alpha-actinin, GRIP1 and PXN. Interacts (via LIM domain 2) with ACTL7A (via N-terminus). Heterodimer with ACTL7A; the heterodimer interacts with ENAH to form a heterotrimer.

The protein localises to the cytoplasm. It localises to the cell junction. Its subcellular location is the focal adhesion. Scaffold protein that may play a role in cell adhesion, cell spreading and in the reorganization of the actin cytoskeleton. Plays a role in the regulation of cell proliferation. May act as a tumor suppressor. This chain is Testin (TES), found in Muntiacus muntjak (Barking deer).